A 201-amino-acid chain; its full sequence is FMN-dependent NADH:quinone oxidoreductase (201 aa).

Residues Ser10, Ser16 to Ser18, Met96 to Phe99, and Ser140 to Gly143 contribute to the FMN site.

Belongs to the azoreductase type 1 family. As to quaternary structure, homodimer. Requires FMN as cofactor.

The catalysed reaction is 2 a quinone + NADH + H(+) = 2 a 1,4-benzosemiquinone + NAD(+). The enzyme catalyses N,N-dimethyl-1,4-phenylenediamine + anthranilate + 2 NAD(+) = 2-(4-dimethylaminophenyl)diazenylbenzoate + 2 NADH + 2 H(+). In terms of biological role, quinone reductase that provides resistance to thiol-specific stress caused by electrophilic quinones. Also exhibits azoreductase activity. Catalyzes the reductive cleavage of the azo bond in aromatic azo compounds to the corresponding amines. The protein is FMN-dependent NADH:quinone oxidoreductase of Shigella boydii serotype 4 (strain Sb227).